The chain runs to 1571 residues: Pentafunctional AROM polypeptide (1571 aa).

The interval 1–384 is 3-dehydroquinate synthase; it reads MEQPTTIQIL…HEQKASVVSN (384 aa). Residues 44 to 46, 81 to 84, 114 to 116, and Asp-119 each bind NAD(+); these read DTN, ESSK, and GGV. Arg-130 is a 7-phospho-2-dehydro-3-deoxy-D-arabino-heptonate binding site. NAD(+) is bound at residue 139 to 140; the sequence is TT. Residues Asp-146 and Lys-152 each contribute to the 7-phospho-2-dehydro-3-deoxy-D-arabino-heptonate site. Lys-161 provides a ligand contact to NAD(+). Position 162 (Asn-162) interacts with 7-phospho-2-dehydro-3-deoxy-D-arabino-heptonate. Residues 179-182 and Asn-190 each bind NAD(+); that span reads FLNT. Glu-194 is a Zn(2+) binding site. 7-phospho-2-dehydro-3-deoxy-D-arabino-heptonate is bound by residues 194-197 and Lys-250; that span reads EVIK. Glu-260 (proton acceptor; for 3-dehydroquinate synthase activity) is an active-site residue. 7-phospho-2-dehydro-3-deoxy-D-arabino-heptonate is bound by residues 264–268 and His-271; that span reads RNLLN. His-271 serves as a coordination point for Zn(2+). His-275 serves as the catalytic Proton acceptor; for 3-dehydroquinate synthase activity. Residues His-287 and Lys-356 each coordinate 7-phospho-2-dehydro-3-deoxy-D-arabino-heptonate. His-287 serves as a coordination point for Zn(2+). An EPSP synthase region spans residues 397-843; the sequence is VLPGIPKPLN…WDALAQTFKV (447 aa). The active-site For EPSP synthase activity is the Cys-825. A shikimate kinase region spans residues 866–1057; the sequence is ASIFIIGMRG…KKKDHSFFVS (192 aa). Position 872-879 (872-879) interacts with ATP; sequence GMRGAGKT. The segment at 1058 to 1278 is 3-dehydroquinase; the sequence is LTLPDLQLSA…AAPGQVSAKD (221 aa). His-1181 functions as the Proton acceptor; for 3-dehydroquinate dehydratase activity in the catalytic mechanism. Residue Lys-1209 is the Schiff-base intermediate with substrate; for 3-dehydroquinate dehydratase activity of the active site. Residues 1291 to 1571 form a shikimate dehydrogenase region; sequence AKKFALFGKP…EDARAAVMNI (281 aa).

The protein in the N-terminal section; belongs to the sugar phosphate cyclases superfamily. Dehydroquinate synthase family. It in the 2nd section; belongs to the EPSP synthase family. This sequence in the 3rd section; belongs to the shikimate kinase family. In the 4th section; belongs to the type-I 3-dehydroquinase family. The protein in the C-terminal section; belongs to the shikimate dehydrogenase family. Homodimer. It depends on Zn(2+) as a cofactor.

The protein resides in the cytoplasm. The enzyme catalyses 7-phospho-2-dehydro-3-deoxy-D-arabino-heptonate = 3-dehydroquinate + phosphate. It catalyses the reaction 3-dehydroquinate = 3-dehydroshikimate + H2O. It carries out the reaction shikimate + NADP(+) = 3-dehydroshikimate + NADPH + H(+). The catalysed reaction is shikimate + ATP = 3-phosphoshikimate + ADP + H(+). The enzyme catalyses 3-phosphoshikimate + phosphoenolpyruvate = 5-O-(1-carboxyvinyl)-3-phosphoshikimate + phosphate. Its pathway is metabolic intermediate biosynthesis; chorismate biosynthesis; chorismate from D-erythrose 4-phosphate and phosphoenolpyruvate: step 2/7. It participates in metabolic intermediate biosynthesis; chorismate biosynthesis; chorismate from D-erythrose 4-phosphate and phosphoenolpyruvate: step 3/7. The protein operates within metabolic intermediate biosynthesis; chorismate biosynthesis; chorismate from D-erythrose 4-phosphate and phosphoenolpyruvate: step 4/7. It functions in the pathway metabolic intermediate biosynthesis; chorismate biosynthesis; chorismate from D-erythrose 4-phosphate and phosphoenolpyruvate: step 5/7. Its pathway is metabolic intermediate biosynthesis; chorismate biosynthesis; chorismate from D-erythrose 4-phosphate and phosphoenolpyruvate: step 6/7. The AROM polypeptide catalyzes 5 consecutive enzymatic reactions in prechorismate polyaromatic amino acid biosynthesis. The sequence is that of Pentafunctional AROM polypeptide from Arthroderma otae (strain ATCC MYA-4605 / CBS 113480) (Microsporum canis).